The sequence spans 599 residues: DNA-directed RNA polymerase III subunit RPC3 (599 aa).

The tract at residues 335 to 371 is disordered; sequence PRLDGLRPRGKGSRSVSPRPQSKRVKTEEGYTKTGDY. Basic and acidic residues predominate over residues 359 to 371; sequence VKTEEGYTKTGDY. The segment at 526 to 547 is leucine-zipper; sequence IYKSLSRCFERVAAERAKLPIL.

This sequence belongs to the RNA polymerase beta chain family. As to quaternary structure, component of the RNA polymerase III (Pol III) complex consisting of 17 subunits.

Its subcellular location is the nucleus. In terms of biological role, DNA-dependent RNA polymerase catalyzes the transcription of DNA into RNA using the four ribonucleoside triphosphates as substrates. Specific core component of RNA polymerase III which synthesizes small RNAs, such as 5S rRNA and tRNAs. The polypeptide is DNA-directed RNA polymerase III subunit RPC3 (RPC82) (Yarrowia lipolytica (strain CLIB 122 / E 150) (Yeast)).